Here is a 29-residue protein sequence, read N- to C-terminus: MDIVSIAWAALMVVFTFSLSLVVWGRSGL.

Residues 3–23 (IVSIAWAALMVVFTFSLSLVV) form a helical membrane-spanning segment.

This sequence belongs to the PetN family. As to quaternary structure, the 4 large subunits of the cytochrome b6-f complex are cytochrome b6, subunit IV (17 kDa polypeptide, PetD), cytochrome f and the Rieske protein, while the 4 small subunits are PetG, PetL, PetM and PetN. The complex functions as a dimer.

The protein localises to the plastid. The protein resides in the chloroplast thylakoid membrane. In terms of biological role, component of the cytochrome b6-f complex, which mediates electron transfer between photosystem II (PSII) and photosystem I (PSI), cyclic electron flow around PSI, and state transitions. This is Cytochrome b6-f complex subunit 8 from Angiopteris evecta (Mule's foot fern).